The following is a 123-amino-acid chain: Small ribosomal subunit protein uS13 (123 aa).

Residues 97 to 123 (PVRGQRTHTNAKTRKGRSKLPVAAKKK) are disordered.

It belongs to the universal ribosomal protein uS13 family. As to quaternary structure, part of the 30S ribosomal subunit. Forms a loose heterodimer with protein S19. Forms two bridges to the 50S subunit in the 70S ribosome.

Functionally, located at the top of the head of the 30S subunit, it contacts several helices of the 16S rRNA. In the 70S ribosome it contacts the 23S rRNA (bridge B1a) and protein L5 of the 50S subunit (bridge B1b), connecting the 2 subunits; these bridges are implicated in subunit movement. Contacts the tRNAs in the A and P-sites. The polypeptide is Small ribosomal subunit protein uS13 (Ehrlichia chaffeensis (strain ATCC CRL-10679 / Arkansas)).